The following is a 206-amino-acid chain: Probable GTP-binding protein EngB (206 aa).

The region spanning 8–195 (RSDEVVLVGR…EDAVNSHFDA (188 aa)) is the EngB-type G domain. GTP contacts are provided by residues 16 to 23 (GRSNVGKS), 41 to 45 (GVTRQ), 60 to 63 (DLPG), 140 to 143 (NKMD), and 175 to 177 (ITA). Mg(2+)-binding residues include Ser-23 and Thr-43.

The protein belongs to the TRAFAC class TrmE-Era-EngA-EngB-Septin-like GTPase superfamily. EngB GTPase family. Requires Mg(2+) as cofactor.

Its function is as follows. Necessary for normal cell division and for the maintenance of normal septation. The protein is Probable GTP-binding protein EngB of Halobacterium salinarum (strain ATCC 29341 / DSM 671 / R1).